A 467-amino-acid chain; its full sequence is Serine/threonine-protein kinase US3 homolog (467 aa).

The segment at 64 to 155 is disordered; that stretch reads GPEVAPPART…PAGGVTREEA (92 aa). Over residues 99 to 111 the composition is skewed to basic and acidic residues; that stretch reads NERRAATGDEKES. Acidic residues predominate over residues 117 to 144; that stretch reads NESESESESESESESGADDGDWDDDDDA. The Protein kinase domain maps to 164-462; the sequence is FRIIRRLTPG…AAELLEHPVF (299 aa). Residues 170–178 and K194 each bind ATP; that span reads LTPGSEGRV. Catalysis depends on D279, which acts as the Proton acceptor.

This sequence belongs to the protein kinase superfamily. Ser/Thr protein kinase family. Phosphorylated by UL13 homolog; this phosphorylation regulates subsequent phosphorylation of UL31 and UL34 homologs by US3. Autophosphorylated.

The protein localises to the host cytoplasm. Its subcellular location is the host nucleus. It carries out the reaction L-seryl-[protein] + ATP = O-phospho-L-seryl-[protein] + ADP + H(+). It catalyses the reaction L-threonyl-[protein] + ATP = O-phospho-L-threonyl-[protein] + ADP + H(+). Multifunctional serine/threonine kinase that plays a role in several processes including egress of virus particles from the nucleus, modulation of the actin cytoskeleton and inhibition of apoptosis. Phosphorylates UL31 and UL34 homologs, two critical regulators of capsid budding from nucleus to endoplasmic reticulum, thereby facilitating virion egress. Modulates and redistributes host components of the nuclear envelope, including LMNA, emerin/EMD and the nuclear matrix protein MATR3. Phosphorylates envelope glycoprotein B (gB), probably to direct it to the cell surface. Promotes virus intracellular spread by restructuring host cell cytoskeleton. Blocks host apoptosis to extend cell survival and allow efficient viral replication. Promotes viral gene expression by phosphorylating host HDAC2 to reduce viral genome silencing. The sequence is that of Serine/threonine-protein kinase US3 homolog from Bos taurus (Bovine).